The sequence spans 703 residues: Harmonin-binding protein USHBP1 (703 aa).

A compositionally biased stretch (basic residues) spans 1-15 (MSARATRPRSRRGRH). 2 disordered regions span residues 1-113 (MSAR…PPGN) and 138-172 (HQPP…CQRE). Residues 189–227 (SREDELVRTQASLEAIRAEKETLQKEVQELQDSLLRLEP) adopt a coiled-coil conformation. The disordered stretch occupies residues 228–256 (CPHLSHNQAGGSGSGSSSSEADREPWETQ). A coiled-coil region spans residues 289–309 (EMHIMEAQMEQLRGSIEKLKC). Residues 396-416 (MDAGAQQNPQPSPEGSSVDKP) form a disordered region. The span at 400–410 (AQQNPQPSPEG) shows a compositional bias: polar residues. Residues 476-513 (RLEKTQIQQDLVAAREALADLMLRLQLVRREKRGLELR) are a coiled coil. Positions 540-583 (AGGANSSGGHSSGGGSSGDEEEWYQGLPAVPGGTSGIDGGQVGR) are disordered. A compositionally biased stretch (gly residues) spans 572–581 (GTSGIDGGQV). A coiled-coil region spans residues 596-681 (ASLTRTLDLQ…QAEEVAVLEA (86 aa)).

This sequence belongs to the MCC family. In terms of assembly, interacts via its C-terminus with the first PDZ domain of USH1C. As to expression, highest level of expression in heart, and moderate to low expression in skeletal muscle, kidney, liver, small intestine, placenta and lung.

The sequence is that of Harmonin-binding protein USHBP1 from Homo sapiens (Human).